A 555-amino-acid polypeptide reads, in one-letter code: Glutamine--tRNA ligase (555 aa).

The short motif at 34–44 is the 'HIGH' region element; sequence PEPNGYLHIGH. ATP-binding positions include 35–37 and 41–47; these read EPN and HIGHAKS. Residues aspartate 67 and tyrosine 212 each coordinate L-glutamine. Residues threonine 231, 261–262, and 269–271 each bind ATP; these read RL and MSK. Residues 268-272 carry the 'KMSKS' region motif; it reads IMSKR.

Belongs to the class-I aminoacyl-tRNA synthetase family. Monomer.

Its subcellular location is the cytoplasm. It catalyses the reaction tRNA(Gln) + L-glutamine + ATP = L-glutaminyl-tRNA(Gln) + AMP + diphosphate. The chain is Glutamine--tRNA ligase from Yersinia pseudotuberculosis serotype O:3 (strain YPIII).